A 432-amino-acid chain; its full sequence is MRLLTRRAGHGAATLALRVIHMQRVPVLRLPAILDMERKIPSRESPRRLSAKPGRGTEMKKLARPLGVVAADSDKDSGFSDGSSECLSSAEQMESEDMLSALGCKREDKRRQPSKAADTALPTLPPMVVMKSVLVKQGSSSSQLQSWTVQPSFEVISAQPQLFVLHPPVPSPVSSCQTGEKKSESRNYLPILNSYTKIAPHPGKRGLNSEDRGTSGVSKKLCTERPGPSLSSSEPAKTGRVLSSPSTPAPPSSKLTEDSTLQGVPSLGAGGSPQTLQPVSSSHVAKAPSLTLASPASPVCASDSTLHGLESSSPLSPLSASYTSPLWAAEHLCRSPDIFSEQRQNKHRRFQNTLVVLHKSGLLEITLKTKELIRQNQATQAELDQLKEQTQMFIEATKSRAPQAWAKLQASLTSGSSHSGSDLDTLSDHPDV.

Disordered regions lie at residues 71–98 (ADSD…SEDM) and 194–315 (SYTK…SSPL). Ser246 bears the Phosphoserine mark. Polar residues predominate over residues 272–283 (SPQTLQPVSSSH). Residues 364-395 (EITLKTKELIRQNQATQAELDQLKEQTQMFIE) adopt a coiled-coil conformation. Positions 408–432 (LQASLTSGSSHSGSDLDTLSDHPDV) are disordered. Low complexity predominate over residues 411-424 (SLTSGSSHSGSDLD).

In terms of assembly, interacts with CLOCK. Forms a ternary complex with the CLOCK-BMAL1 heterodimer. Interacts with CAD and HSPA5. Expressed in the heart, kidney and liver and shows a circadian oscillation in these tissues with a peak at circadian time 14 hours (at protein level). Expressed in the brain, including the suprachiasmatic nucleus (SCN) of the brain, and in multiple peripheral tissues such as heart, liver and kidney. Exhibits a circadian oscillation in the peripheral tissues with a peak at circadian time 14 hours.

The protein resides in the nucleus. Its subcellular location is the cytoplasm. It localises to the cytosol. Its function is as follows. Transcriptional repressor which may act as a negative-feedback regulator of CLOCK-BMAL1 transcriptional activity in the circadian-clock mechanism. May stimulate BMAL1-dependent phosphorylation of CLOCK. However, the physiological relevance of these observations is unsure, since experiments in knockout mice showed that CIPC is not critially required for basic circadian clock. This chain is CLOCK-interacting pacemaker (Cipc), found in Mus musculus (Mouse).